The chain runs to 183 residues: MSRVGNRLLSIPSGVNVEVEKSLVKITGKLGTLSVPFDSKKLSVLNKDSMVIVKRANDEKETKMLHGTTNANINNALIGVNSGHTKKLKIVGVGYKAAVNGNKINLNLGYSHPIDLEIPAGLNVTCPQATEVVITGADKAVVGQFAAVIRSKRPPEPYKGKGVAYSNEVIIRKVGKTAEGSKK.

Belongs to the universal ribosomal protein uL6 family. In terms of assembly, part of the 50S ribosomal subunit.

This protein binds to the 23S rRNA, and is important in its secondary structure. It is located near the subunit interface in the base of the L7/L12 stalk, and near the tRNA binding site of the peptidyltransferase center. The polypeptide is Large ribosomal subunit protein uL6 (Malacoplasma penetrans (strain HF-2) (Mycoplasma penetrans)).